We begin with the raw amino-acid sequence, 394 residues long: Seipin (394 aa).

The Cytoplasmic segment spans residues 1–27 (MVNDPPVPALLWAQEMGHVMAGRARKL). The helical transmembrane segment at 28–48 (LLQFGVFFCTILLLLWVSVFL) threads the bilayer. Residues 49–242 (YGSFYYSYMP…TCAFVGVASN (194 aa)) are Lumenal-facing. 2 N-linked (GlcNAc...) asparagine glycosylation sites follow: Asn88 and Asn242. The chain crosses the membrane as a helical span at residues 243-263 (FTFLSVIVLFSYMQWVWGGIW). The Cytoplasmic portion of the chain corresponds to 264-394 (PRQRLSLQVN…VRQRPICSSS (131 aa)). The disordered stretch occupies residues 281-394 (RKDIQRKVSA…VRQRPICSSS (114 aa)). The residue at position 289 (Ser289) is a Phosphoserine. Over residues 292–303 (QPGPQGQEESPQ) the composition is skewed to low complexity. Residues Ser346 and Ser351 each carry the phosphoserine modification.

Belongs to the seipin family. In terms of assembly, undecamer (an oligomer having eleven subunits). Oligomerization is important for its function in lipid droplet formation. Interacts with LDAF1 to form an oligomeric complex. Interacts with RAB18. Interacts with ZFYVE1 in a RAB18-dependent manner.

The protein resides in the endoplasmic reticulum membrane. Its subcellular location is the lipid droplet. In terms of biological role, plays a crucial role in the formation of lipid droplets (LDs) which are storage organelles at the center of lipid and energy homeostasis. In association with LDAF1, defines the sites of LD formation in the ER. Also required for growth and maturation of small nascent LDs into larger mature LDs. Mediates the formation and/or stabilization of endoplasmic reticulum-lipid droplets (ER-LD) contacts, facilitating protein and lipid delivery from the ER into growing LDs. Regulates the maturation of ZFYVE1-positive nascent LDs and the function of the RAB18-ZFYVE1 complex in mediating the formation of ER-LD contacts. Binds anionic phospholipids including phosphatidic acid. Plays an important role in the differentiation and development of adipocytes. This chain is Seipin, found in Bos taurus (Bovine).